The sequence spans 40 residues: Photosystem I reaction center subunit IX (40 aa).

A helical membrane pass occupies residues 12–34 (APVLLTAWMSLTAGMIIEIQRFF).

Belongs to the PsaJ family.

The protein localises to the plastid. Its subcellular location is the chloroplast thylakoid membrane. May help in the organization of the PsaE and PsaF subunits. The sequence is that of Photosystem I reaction center subunit IX from Emiliania huxleyi (Coccolithophore).